A 1218-amino-acid chain; its full sequence is Probable cation-transporting ATPase 13A5 (1218 aa).

The next 4 helical transmembrane spans lie at 33-53, 222-242, 401-421, and 433-453; these read KAFC…VFYW, GYIE…VLSV, FIVF…GVYM, and MALI…LTIG. The 4-aspartylphosphate intermediate role is filled by Asp-486. 3 N-linked (GlcNAc...) asparagine glycosylation sites follow: Asn-540, Asn-669, and Asn-819. Mg(2+)-binding residues include Asp-850 and Asp-854. Helical transmembrane passes span 903 to 923, 940 to 956, 973 to 993, 1042 to 1062, 1077 to 1097, and 1115 to 1135; these read FGVF…ALLL, VAIT…THAY, LLLS…SAFL, FETT…AFIF, IFSF…FSDF, and VLIL…EDSI.

Belongs to the cation transport ATPase (P-type) (TC 3.A.3) family. Type V subfamily.

The protein resides in the membrane. The catalysed reaction is ATP + H2O = ADP + phosphate + H(+). This Homo sapiens (Human) protein is Probable cation-transporting ATPase 13A5 (ATP13A5).